Here is a 352-residue protein sequence, read N- to C-terminus: GTPase Obg (352 aa).

The region spanning 1-159 (MQFIDQAEIQ…RMLRLELKLL (159 aa)) is the Obg domain. Residues 160-330 (AEVGIIGLPN…LMQEIWGLLE (171 aa)) enclose the OBG-type G domain. GTP is bound by residues 166–173 (GLPNAGKS), 191–195 (FTTLV), 213–216 (DIPG), 280–283 (NKVD), and 311–313 (SAV). Residues serine 173 and threonine 193 each coordinate Mg(2+).

This sequence belongs to the TRAFAC class OBG-HflX-like GTPase superfamily. OBG GTPase family. Monomer. Mg(2+) is required as a cofactor.

It localises to the cytoplasm. In terms of biological role, an essential GTPase which binds GTP, GDP and possibly (p)ppGpp with moderate affinity, with high nucleotide exchange rates and a fairly low GTP hydrolysis rate. Plays a role in control of the cell cycle, stress response, ribosome biogenesis and in those bacteria that undergo differentiation, in morphogenesis control. The sequence is that of GTPase Obg from Trichodesmium erythraeum (strain IMS101).